The following is an 80-amino-acid chain: Translation initiation factor IF-1, chloroplastic (80 aa).

An S1-like domain is found at 1–74 (MKEQKWIHEG…TRGRIIYRLR (74 aa)).

This sequence belongs to the IF-1 family. In terms of assembly, component of the 30S ribosomal translation pre-initiation complex which assembles on the 30S ribosome in the order IF-2 and IF-3, IF-1 and N-formylmethionyl-tRNA(fMet); mRNA recruitment can occur at any time during PIC assembly.

It is found in the plastid. The protein resides in the chloroplast. Functionally, one of the essential components for the initiation of protein synthesis. Stabilizes the binding of IF-2 and IF-3 on the 30S subunit to which N-formylmethionyl-tRNA(fMet) subsequently binds. Helps modulate mRNA selection, yielding the 30S pre-initiation complex (PIC). Upon addition of the 50S ribosomal subunit IF-1, IF-2 and IF-3 are released leaving the mature 70S translation initiation complex. The chain is Translation initiation factor IF-1, chloroplastic from Illicium parviflorum (Yellow anise tree).